The primary structure comprises 726 residues: Catalase-peroxidase (726 aa).

A disordered region spans residues 1–33 (MSTSDDIHNTTATGKCPFHQGGHDQSAGGGTTT). A cross-link (tryptophyl-tyrosyl-methioninium (Trp-Tyr) (with M-252)) is located at residues 105–226 (WHGAGTYRSI…LGATEMGLIY (122 aa)). Histidine 106 acts as the Proton acceptor in catalysis. The tryptophyl-tyrosyl-methioninium (Tyr-Met) (with W-105) cross-link spans 226 to 252 (YVNPEGPDHSGEPLSAAAAIRATFGNM). Histidine 267 contacts heme b.

The protein belongs to the peroxidase family. Peroxidase/catalase subfamily. In terms of assembly, homodimer or homotetramer. Requires heme b as cofactor. In terms of processing, formation of the three residue Trp-Tyr-Met cross-link is important for the catalase, but not the peroxidase activity of the enzyme.

The catalysed reaction is H2O2 + AH2 = A + 2 H2O. It carries out the reaction 2 H2O2 = O2 + 2 H2O. Bifunctional enzyme with both catalase and broad-spectrum peroxidase activity. The polypeptide is Catalase-peroxidase (Escherichia coli (strain UTI89 / UPEC)).